The following is a 603-amino-acid chain: Threonine--tRNA ligase (603 aa).

The tract at residues 197 to 499 (DHRKLGKELG…LIEEYAGDFP (303 aa)) is catalytic. Zn(2+) contacts are provided by cysteine 296, histidine 347, and histidine 476.

This sequence belongs to the class-II aminoacyl-tRNA synthetase family. As to quaternary structure, homodimer. It depends on Zn(2+) as a cofactor.

The protein resides in the cytoplasm. It carries out the reaction tRNA(Thr) + L-threonine + ATP = L-threonyl-tRNA(Thr) + AMP + diphosphate + H(+). Catalyzes the attachment of threonine to tRNA(Thr) in a two-step reaction: L-threonine is first activated by ATP to form Thr-AMP and then transferred to the acceptor end of tRNA(Thr). Also edits incorrectly charged L-seryl-tRNA(Thr). The chain is Threonine--tRNA ligase from Synechocystis sp. (strain ATCC 27184 / PCC 6803 / Kazusa).